The sequence spans 193 residues: dCTP deaminase (193 aa).

Residues 110-115 (RSSLAR), D128, 136-138 (VLE), Y171, K178, and Q182 each bind dCTP. E138 acts as the Proton donor/acceptor in catalysis. Positions 168–193 (DRPYNRRQDAKYKNQQGAVSSRIDED) are disordered. Positions 170 to 179 (PYNRRQDAKY) are enriched in basic and acidic residues.

Belongs to the dCTP deaminase family. Homotrimer.

The catalysed reaction is dCTP + H2O + H(+) = dUTP + NH4(+). It participates in pyrimidine metabolism; dUMP biosynthesis; dUMP from dCTP (dUTP route): step 1/2. Its function is as follows. Catalyzes the deamination of dCTP to dUTP. The polypeptide is dCTP deaminase (Photorhabdus laumondii subsp. laumondii (strain DSM 15139 / CIP 105565 / TT01) (Photorhabdus luminescens subsp. laumondii)).